Here is a 162-residue protein sequence, read N- to C-terminus: RNA replication protein (162 aa).

It belongs to the potexvirus/carlavirus RNA replication protein family.

It carries out the reaction RNA(n) + a ribonucleoside 5'-triphosphate = RNA(n+1) + diphosphate. The enzyme catalyses ATP + H2O = ADP + phosphate + H(+). RNA replication. The central part of this protein possibly functions as an ATP-binding helicase. In Lilium formosanum, this protein is RNA replication protein.